A 282-amino-acid chain; its full sequence is 4-hydroxy-3-methylbut-2-enyl diphosphate reductase (282 aa).

Cysteine 14 contacts [4Fe-4S] cluster. (2E)-4-hydroxy-3-methylbut-2-enyl diphosphate-binding residues include histidine 43 and histidine 78. Dimethylallyl diphosphate-binding residues include histidine 43 and histidine 78. Isopentenyl diphosphate-binding residues include histidine 43 and histidine 78. A [4Fe-4S] cluster-binding site is contributed by cysteine 100. Histidine 128 contributes to the (2E)-4-hydroxy-3-methylbut-2-enyl diphosphate binding site. Residue histidine 128 coordinates dimethylallyl diphosphate. Histidine 128 contributes to the isopentenyl diphosphate binding site. Catalysis depends on glutamate 130, which acts as the Proton donor. Threonine 164 serves as a coordination point for (2E)-4-hydroxy-3-methylbut-2-enyl diphosphate. A [4Fe-4S] cluster-binding site is contributed by cysteine 192. Positions 220, 221, 222, and 266 each coordinate (2E)-4-hydroxy-3-methylbut-2-enyl diphosphate. Residues serine 220, serine 221, asparagine 222, and serine 266 each coordinate dimethylallyl diphosphate. Isopentenyl diphosphate contacts are provided by serine 220, serine 221, asparagine 222, and serine 266.

Belongs to the IspH family. Requires [4Fe-4S] cluster as cofactor.

The catalysed reaction is isopentenyl diphosphate + 2 oxidized [2Fe-2S]-[ferredoxin] + H2O = (2E)-4-hydroxy-3-methylbut-2-enyl diphosphate + 2 reduced [2Fe-2S]-[ferredoxin] + 2 H(+). The enzyme catalyses dimethylallyl diphosphate + 2 oxidized [2Fe-2S]-[ferredoxin] + H2O = (2E)-4-hydroxy-3-methylbut-2-enyl diphosphate + 2 reduced [2Fe-2S]-[ferredoxin] + 2 H(+). It functions in the pathway isoprenoid biosynthesis; dimethylallyl diphosphate biosynthesis; dimethylallyl diphosphate from (2E)-4-hydroxy-3-methylbutenyl diphosphate: step 1/1. It participates in isoprenoid biosynthesis; isopentenyl diphosphate biosynthesis via DXP pathway; isopentenyl diphosphate from 1-deoxy-D-xylulose 5-phosphate: step 6/6. Functionally, catalyzes the conversion of 1-hydroxy-2-methyl-2-(E)-butenyl 4-diphosphate (HMBPP) into a mixture of isopentenyl diphosphate (IPP) and dimethylallyl diphosphate (DMAPP). Acts in the terminal step of the DOXP/MEP pathway for isoprenoid precursor biosynthesis. The chain is 4-hydroxy-3-methylbut-2-enyl diphosphate reductase from Clostridium perfringens (strain ATCC 13124 / DSM 756 / JCM 1290 / NCIMB 6125 / NCTC 8237 / Type A).